Reading from the N-terminus, the 178-residue chain is Nuclear transcription factor Y subunit B-2 (178 aa).

A DNA-binding region spans residues L39–S45. A subunit association domain (SAD) region spans residues L66–V77. Residues S131–Q156 are disordered.

This sequence belongs to the NFYB/HAP3 subunit family. In terms of assembly, heterotrimeric transcription factor composed of three components, NF-YA, NF-YB and NF-YC. NF-YB and NF-YC must interact and dimerize for NF-YA association and DNA binding. Interacts with NFYC4 and NFYC6. Ubiquitous.

It is found in the nucleus. Component of the NF-Y/HAP transcription factor complex. The NF-Y complex stimulates the transcription of various genes by recognizing and binding to a CCAAT motif in promoters. May regulate the expression of photosynthetic genes, and may be involved in chloroplast and amyloplast development. The protein is Nuclear transcription factor Y subunit B-2 (NFYB2) of Oryza sativa subsp. japonica (Rice).